The chain runs to 475 residues: Aspartyl/glutamyl-tRNA(Asn/Gln) amidotransferase subunit B (475 aa).

It belongs to the GatB/GatE family. GatB subfamily. As to quaternary structure, heterotrimer of A, B and C subunits.

It catalyses the reaction L-glutamyl-tRNA(Gln) + L-glutamine + ATP + H2O = L-glutaminyl-tRNA(Gln) + L-glutamate + ADP + phosphate + H(+). The enzyme catalyses L-aspartyl-tRNA(Asn) + L-glutamine + ATP + H2O = L-asparaginyl-tRNA(Asn) + L-glutamate + ADP + phosphate + 2 H(+). In terms of biological role, allows the formation of correctly charged Asn-tRNA(Asn) or Gln-tRNA(Gln) through the transamidation of misacylated Asp-tRNA(Asn) or Glu-tRNA(Gln) in organisms which lack either or both of asparaginyl-tRNA or glutaminyl-tRNA synthetases. The reaction takes place in the presence of glutamine and ATP through an activated phospho-Asp-tRNA(Asn) or phospho-Glu-tRNA(Gln). The chain is Aspartyl/glutamyl-tRNA(Asn/Gln) amidotransferase subunit B from Staphylococcus saprophyticus subsp. saprophyticus (strain ATCC 15305 / DSM 20229 / NCIMB 8711 / NCTC 7292 / S-41).